We begin with the raw amino-acid sequence, 325 residues long: MAQMTMVQAITDALRIELKNDPNVLIFGEDVGVNGGVFRATEGLQAEFGEDRVFDTPLAESGIGGLAIGLALQGFRPVPEIQFFGFVYEVMDSICGQMARIRYRTGGRYHMPITIRSPFGGGVHTPELHSDSLEGLVAQQPGLKVVIPSTPYDAKGLLISAIRDNDPVIFLEHLKLYRSFRQEVPEGEYTIPIGKADIKREGKDITIIAYGAMVHESLKAAAELEKEGISAEVVDLRTVQPLDIETIIGSVEKTGRAIVVQEAQRQAGIAANVVAEINERAILSLEAPVLRVAAPDTVYPFAQAESVWLPNFKDVIETAKKVMNF.

Residue Glu60 coordinates thiamine diphosphate.

Heterodimer of an alpha and a beta chain. Thiamine diphosphate serves as cofactor.

It catalyses the reaction N(6)-[(R)-lipoyl]-L-lysyl-[protein] + pyruvate + H(+) = N(6)-[(R)-S(8)-acetyldihydrolipoyl]-L-lysyl-[protein] + CO2. Functionally, the pyruvate dehydrogenase complex catalyzes the overall conversion of pyruvate to acetyl-CoA and CO(2). It contains multiple copies of three enzymatic components: pyruvate dehydrogenase (E1), dihydrolipoamide acetyltransferase (E2) and lipoamide dehydrogenase (E3). The sequence is that of Pyruvate dehydrogenase E1 component subunit beta (pdhB) from Geobacillus stearothermophilus (Bacillus stearothermophilus).